We begin with the raw amino-acid sequence, 482 residues long: Glycogen synthase (482 aa).

Position 15 (K15) interacts with ADP-alpha-D-glucose.

Belongs to the glycosyltransferase 1 family. Bacterial/plant glycogen synthase subfamily.

It catalyses the reaction [(1-&gt;4)-alpha-D-glucosyl](n) + ADP-alpha-D-glucose = [(1-&gt;4)-alpha-D-glucosyl](n+1) + ADP + H(+). Its pathway is glycan biosynthesis; glycogen biosynthesis. In terms of biological role, synthesizes alpha-1,4-glucan chains using ADP-glucose. This Elusimicrobium minutum (strain Pei191) protein is Glycogen synthase.